An 858-amino-acid chain; its full sequence is NEDD4-binding protein 1 (858 aa).

The tract at residues 17 to 37 is disordered; sequence TCTEPPGGRQSPTASRAQPDS. The segment covering 26-37 has biased composition (polar residues); sequence QSPTASRAQPDS. One can recognise a KH-like domain in the interval 96–180; sequence KEDVYKAKEY…VQQFVALFQE (85 aa). Disordered stretches follow at residues 262 to 321 and 388 to 424; these read EDKT…TWTV and QKTQSTQGAQRTSRTPDPSPCANASSTSTSNRLKEKE. The span at 285 to 316 shows a compositional bias: basic and acidic residues; sequence RSSESEQRDTKRQYSLERREEEQCEEREREPT. The segment covering 389–418 has biased composition (polar residues); that stretch reads KTQSTQGAQRTSRTPDPSPCANASSTSTSN. The RNase NYN domain occupies 598-750; it reads LRHIIIDGSN…LGKHGPHLDE (153 aa). Residues 774-784 are compositionally biased toward polar residues; the sequence is SVYSQAAQSTA. Residues 774 to 823 form a disordered region; sequence SVYSQAAQSTAHPSSPSHWPHSGPPDWHLPRPSPSPPPQRSPSETTELKR. Low complexity predominate over residues 785–799; the sequence is HPSSPSHWPHSGPPD. The segment covering 804–813 has biased composition (pro residues); it reads RPSPSPPPQR. Positions 813–858 are coCUN; the sequence is RSPSETTELKRKLYDIFPDQKQRIDRILSDNPYMRDLNALSGLLLG.

Belongs to the N4BP1 family.

It localises to the nucleus. Its subcellular location is the nucleolus. The protein localises to the PML body. Its function is as follows. Potent suppressor of cytokine production that acts as a regulator of innate immune signaling and inflammation. Acts as a key negative regulator of select cytokine and chemokine responses elicited by TRIF-independent Toll-like receptors (TLRs), thereby limiting inflammatory cytokine responses to minor insults. Has ribonuclease activity. The protein is NEDD4-binding protein 1 of Danio rerio (Zebrafish).